The primary structure comprises 264 residues: Short-chain dehydrogenase/reductase ucsE (264 aa).

A helical membrane pass occupies residues 13–32 (LVVVVGGTSGLGFAVAQAAV). Positions 23, 43, and 74 each coordinate NADP(+). Residue Asn125 is glycosylated (N-linked (GlcNAc...) asparagine). 2 residues coordinate NADP(+): Arg130 and Lys139. Residue Ser157 is the Proton donor of the active site. 2 residues coordinate NADP(+): Val202 and Thr204.

The protein belongs to the short-chain dehydrogenases/reductases (SDR) family. Requires NADP(+) as cofactor.

It localises to the membrane. It participates in mycotoxin biosynthesis. Functionally, short-chain dehydrogenase/reductase; part of the gene cluster that mediates the biosynthesis of UCS1025A, a member of the pyrrolizidinone family that acts as a strong telomerase inhibitor and displays potent antibacterial and antitumor properties. These compounds share a hemiaminal-containing pyrrolizidinone core fused with a gamma-lactone, giving a furopyrrolizidine that is connected to a decalin fragment. The polyketide synthase module (PKS) of the PKS-NRPS ucsA is responsible for the synthesis of the polyketide backbone via the condensation of an acetyl-CoA starter unit with 6 malonyl-CoA units. The downstream nonribosomal peptide synthetase (NRPS) module then amidates the carboxyl end of the polyketide with a 2S,3S-methylproline derived from L-isoleucine by the 2-oxoglutarate-dependent dioxygenase ucsF which converts L-isoleucine to (4S,5S)-4-methylpyrroline-5-carboxylate that is further converted to 2S,3S-methylproline by the pyrroline-5-carboxylate reductase ucsG. Reductive release of the completed aminoacyl polyketide from the assembly line can form the 3-pyrrolin-2-one structure via an intramolecular Knoevenagel reaction. Because ucsA lacks a designated enoylreductase (ER) domain, the required activity is provided the enoyl reductase ucsL. This keto acyclic precursor is the substrate of the Diels-Alderase ucsH, that catalyzes the Diels-Alder cycloaddition. Oxidation of the 3S-methyl group to a carboxylate by the cytochrome P450 monooxygenase ucsK allows an oxa-Michael cyclization that might involve the reductase/dehydrogenase ucsI and which furnishes the furopyrrolizidine. The oxidase ucsJ likely plays a critical role in stereoselective reduction of the C5-C6 double bond to afford the required R-configured carboxylate group. Further enolization and oxidation at C5 by an unidentified enzyme affords the last intermediate that can undergo oxa-Michael cyclization to yield UCS1025A. The sequence is that of Short-chain dehydrogenase/reductase ucsE from Acremonium sp.